A 297-amino-acid chain; its full sequence is Light-independent protochlorophyllide reductase iron-sulfur ATP-binding protein (297 aa).

ATP-binding positions include 41–46 (GIGKST) and K70. Residue S45 coordinates Mg(2+). Residues C126 and C160 each coordinate [4Fe-4S] cluster. ATP contacts are provided by residues 211-212 (NR) and 235-237 (PDL).

The protein belongs to the NifH/BchL/ChlL family. Homodimer. Protochlorophyllide reductase is composed of three subunits; BchL, BchN and BchB. Requires [4Fe-4S] cluster as cofactor.

The enzyme catalyses chlorophyllide a + oxidized 2[4Fe-4S]-[ferredoxin] + 2 ADP + 2 phosphate = protochlorophyllide a + reduced 2[4Fe-4S]-[ferredoxin] + 2 ATP + 2 H2O. The protein operates within porphyrin-containing compound metabolism; bacteriochlorophyll biosynthesis (light-independent). In terms of biological role, component of the dark-operative protochlorophyllide reductase (DPOR) that uses Mg-ATP and reduced ferredoxin to reduce ring D of protochlorophyllide (Pchlide) to form chlorophyllide a (Chlide). This reaction is light-independent. The L component serves as a unique electron donor to the NB-component of the complex, and binds Mg-ATP. The protein is Light-independent protochlorophyllide reductase iron-sulfur ATP-binding protein of Methylorubrum extorquens (strain PA1) (Methylobacterium extorquens).